The following is a 70-amino-acid chain: Turripeptide Ici9.2 (70 aa).

Residues 1 to 20 (MKVYCLLLVLLVGLVSQAQG) form the signal peptide. One can recognise a Kazal-like domain in the interval 21-70 (QLDKKCQTMCTMEYLPVCGSDGTTYPNKCTLTSTACVNQMDITVLHNGEC). Intrachain disulfides connect Cys-26-Cys-56, Cys-30-Cys-49, and Cys-38-Cys-70.

The protein belongs to the conopeptide P-like superfamily. Expressed by the venom duct.

The protein resides in the secreted. Functionally, acts as a neurotoxin by inhibiting an ion channel. May also act as a serine protease inhibitor, since it possess the kazal serine protease inhibitor signature. The sequence is that of Turripeptide Ici9.2 from Iotyrris cingulifera (Sea snail).